Reading from the N-terminus, the 167-residue chain is S-ribosylhomocysteine lyase (167 aa).

Fe cation-binding residues include H54, H58, and C128.

It belongs to the LuxS family. Homodimer. Requires Fe cation as cofactor.

It catalyses the reaction S-(5-deoxy-D-ribos-5-yl)-L-homocysteine = (S)-4,5-dihydroxypentane-2,3-dione + L-homocysteine. In terms of biological role, involved in the synthesis of autoinducer 2 (AI-2) which is secreted by bacteria and is used to communicate both the cell density and the metabolic potential of the environment. The regulation of gene expression in response to changes in cell density is called quorum sensing. Catalyzes the transformation of S-ribosylhomocysteine (RHC) to homocysteine (HC) and 4,5-dihydroxy-2,3-pentadione (DPD). In Haemophilus influenzae (strain PittEE), this protein is S-ribosylhomocysteine lyase.